Consider the following 191-residue polypeptide: Protein YceI (191 aa).

Residues 1-22 (MKKSLLGLTFASLMFSAGSAVA) form the signal peptide.

This sequence belongs to the UPF0312 family. Type 1 subfamily.

It is found in the periplasm. The polypeptide is Protein YceI (Escherichia coli O17:K52:H18 (strain UMN026 / ExPEC)).